Consider the following 243-residue polypeptide: Bidirectional sugar transporter SWEET2a (243 aa).

The N-terminal stretch at 1 to 15 (MMNALGLSVAATSTG) is a signal peptide. At 16-24 (SPFHDVCCY) the chain is on the extracellular side. The helical transmembrane segment at 25–45 (GAGIAGNIFALVLFISPLPTF) threads the bilayer. In terms of domain architecture, MtN3/slv 1 spans 27-112 (GIAGNIFALV…ATFIAFADAK (86 aa)). At 46–56 (KRIVRNGSTEQ) the chain is on the cytoplasmic side. The chain crosses the membrane as a helical span at residues 57-79 (FSAMPYIYSLLNCLICLWYGLPF). At 80 to 90 (VSYGVVLVATV) the chain is on the extracellular side. The helical transmembrane segment at 91 to 111 (NSIGALFQLAYTATFIAFADA) threads the bilayer. Over 112–118 (KNRVKVS) the chain is Cytoplasmic. A helical transmembrane segment spans residues 119-139 (SLLVMVFGVFALIVYVSLALF). Residues 140–146 (DHQTRQL) lie on the Extracellular side of the membrane. A helical transmembrane segment spans residues 147–167 (FVGYLSVASLIFMFASPLSII). Residues 147–229 (FVGYLSVASL…QLVLYGYFRK (83 aa)) form the MtN3/slv 2 domain. Over 168 to 180 (NLVIRTKSVEYMP) the chain is Cytoplasmic. The helical transmembrane segment at 181–201 (FYLSLSMFLMSVSFFAYGVLL) threads the bilayer. Residues 202–203 (HD) lie on the Extracellular side of the membrane. The chain crosses the membrane as a helical span at residues 204-224 (FFIYIPNGIGTVLGVIQLVLY). Topologically, residues 225-243 (GYFRKGSREDSLPLLVTHT) are cytoplasmic.

The protein belongs to the SWEET sugar transporter family. As to quaternary structure, forms homooligomers and/or heterooligomers.

Its subcellular location is the cell membrane. Its function is as follows. Mediates both low-affinity uptake and efflux of sugar across the plasma membrane. This chain is Bidirectional sugar transporter SWEET2a (SWEET2A), found in Oryza sativa subsp. indica (Rice).